The sequence spans 573 residues: PCNA-interacting partner (573 aa).

Residues 463–511 form a disordered region; the sequence is VSEGAQPSVGKARLETSSENVHVDRSKDDKGPRKSTKRKLAKSKQPGVR. A compositionally biased stretch (basic and acidic residues) spans 474 to 494; that stretch reads ARLETSSENVHVDRSKDDKGP. A compositionally biased stretch (basic residues) spans 495–504; the sequence is RKSTKRKLAK.

This sequence belongs to the PARI family. As to quaternary structure, interacts with RAD51 and PCNA. Interacts with PARP1. Interacts with TASOR. In terms of tissue distribution, present in testis (at protein level). Expressed in testis, gastrointestinal tract (jejunum, ileum, and colon) and immune system (thymus and spleen). Weakly expressed in lung, kidney, pituitary gland and muscle.

It is found in the cytoplasm. It localises to the nucleus. Functionally, required to suppress inappropriate homologous recombination, thereby playing a central role DNA repair and in the maintenance of genomic stability. Antagonizes homologous recombination by interfering with the formation of the RAD51-DNA homologous recombination structure. Positively regulate the poly(ADP-ribosyl)ation activity of PARP1; however such function may be indirect. Binds single-strand DNA and poly(A) homopolymers. This Rattus norvegicus (Rat) protein is PCNA-interacting partner (Parpbp).